We begin with the raw amino-acid sequence, 204 residues long: MGGTFDPIHNGHLVAASEVADLFDLHEVVFVPTGQPWQKRSRPVTPAEDRYLMTVIATASNPRFSVSRVDIDRGGATYTKDTLRDLRAQNPDADLYFITGADALASILSWQNWEEMFAIARFIGVSRPGYELDGKHISAAMAELPADALHLVEVPALAISSTDCRLRAEQSRPIWYLVPDGVVQYVAKRDLYRNQNPAGEGERP.

This sequence belongs to the NadD family.

It catalyses the reaction nicotinate beta-D-ribonucleotide + ATP + H(+) = deamido-NAD(+) + diphosphate. It participates in cofactor biosynthesis; NAD(+) biosynthesis; deamido-NAD(+) from nicotinate D-ribonucleotide: step 1/1. Functionally, catalyzes the reversible adenylation of nicotinate mononucleotide (NaMN) to nicotinic acid adenine dinucleotide (NaAD). The polypeptide is Probable nicotinate-nucleotide adenylyltransferase (Mycolicibacterium gilvum (strain PYR-GCK) (Mycobacterium gilvum (strain PYR-GCK))).